Consider the following 158-residue polypeptide: Protein EOLA1 (158 aa).

The 87-residue stretch at 6 to 92 (LSFRQPYAGF…IAGLVDIGET (87 aa)) folds into the ASCH domain.

Belongs to the EOLA family. Interacts with MT2A. As to expression, expressed primarily in heart, skeletal muscle, kidney, liver and placenta. Relatively high level of expression in spleen, colon and small intestine. Almost no expression in brain, thymus, lung and peripheral blood leukocytes. Expressed in epithelial cells (at protein level).

May play a role in cell protection during the inflammatory response. In epithelial cells, negatively regulates IL6 production and apoptosis through the regulation of MT2A expression. In Homo sapiens (Human), this protein is Protein EOLA1.